A 447-amino-acid polypeptide reads, in one-letter code: Gastrin/cholecystokinin type B receptor (447 aa).

At 1-57 (MELLKLNRSVQGTGPGPGASLCRPGAPLLNSSSVGNLSCEPPRIRGAGTRELELAIR) the chain is on the extracellular side. N-linked (GlcNAc...) asparagine glycosylation is found at N7, N30, and N36. Residues 58–79 (ITLYAVIFLMSVGGNMLIIVVL) traverse the membrane as a helical segment. Residues 80–87 (GLSRRLRT) lie on the Cytoplasmic side of the membrane. Residues 88 to 109 (VTNAFLLSLAVSDLLLAVACMP) form a helical membrane-spanning segment. The Extracellular portion of the chain corresponds to 110–131 (FTLLPNLMGTFIFGTVICKAVS). Cysteines 127 and 205 form a disulfide. The chain crosses the membrane as a helical span at residues 132–150 (YLMGVSVSVSTLSLVAIAL). Residues 151-170 (ERYSAICRPLQARVWQTRSH) are Cytoplasmic-facing. A helical membrane pass occupies residues 171 to 189 (AARVIVATWLLSGLLMVPY). Residues 190-219 (PVYTVVQPVGPRVLQCVHRWPSARVRQTWS) lie on the Extracellular side of the membrane. Residues 220-242 (VLLLLLLFFIPGVVMAVAYGLIS) form a helical membrane-spanning segment. The Cytoplasmic portion of the chain corresponds to 243–333 (RELYLGLRFD…KLLAKKRVVR (91 aa)). Positions 258-285 (DSQSRVRNQGGLPGAVHQNGRCRPETGA) are disordered. The chain crosses the membrane as a helical span at residues 334 to 355 (MLLVIVVLFFLCWLPVYSANTW). Topologically, residues 356–373 (RAFDGPGAHRALSGAPIS) are extracellular. The helical transmembrane segment at 374–394 (FIHLLSYASACVNPLVYCFMH) threads the bilayer. At 395–447 (RRFRQACLETCARCCPRPPRARPRALPDEDPPTPSIASLSRLSYTTISTLGPG) the chain is on the cytoplasmic side. C408 is lipidated: S-palmitoyl cysteine.

The protein belongs to the G-protein coupled receptor 1 family. Isoform 1 is expressed in brain, pancreas, stomach, the colon cancer cell line LoVo and the T-lymphoblastoma Jurkat, but not in heart, placenta, liver, lung, skeletal muscle, kidney or the stomach cancer cell line AGS. Expressed at high levels in the small cell lung cancer cell line NCI-H510, at lower levels in NCI-H345, NCI-H69 and GLC-28 cell lines, not expressed in GLC-19 cell line. Within the stomach, expressed at high levels in the mucosa of the gastric fundus and at low levels in the antrum and duodenum. Isoform 2 is present in pancreatic cancer cells and colorectal cancer cells, but not in normal pancreas or colonic mucosa. Isoform 3 is expressed in brain, pancreas, stomach, the stomach cancer cell line AGS and the colon cancer cell line LoVo.

It is found in the cell membrane. In terms of biological role, receptor for gastrin and cholecystokinin. The CCK-B receptors occur throughout the central nervous system where they modulate anxiety, analgesia, arousal, and neuroleptic activity. This receptor mediates its action by association with G proteins that activate a phosphatidylinositol-calcium second messenger system. Isoform 2 is constitutively activated and may regulate cancer cell proliferation via a gastrin-independent mechanism. The sequence is that of Gastrin/cholecystokinin type B receptor from Homo sapiens (Human).